Here is a 241-residue protein sequence, read N- to C-terminus: Probable transcriptional regulatory protein PSHAb0060 (241 aa).

This sequence belongs to the TACO1 family.

It localises to the cytoplasm. The sequence is that of Probable transcriptional regulatory protein PSHAb0060 from Pseudoalteromonas translucida (strain TAC 125).